The following is a 351-amino-acid chain: DNA polymerase IV (351 aa).

Residues 4-184 (FIHIDMDCFY…LPLGKIPGVG (181 aa)) enclose the UmuC domain. Asp8 and Asp102 together coordinate Mg(2+). The active site involves Glu103.

This sequence belongs to the DNA polymerase type-Y family. In terms of assembly, monomer. The cofactor is Mg(2+).

Its subcellular location is the cytoplasm. The enzyme catalyses DNA(n) + a 2'-deoxyribonucleoside 5'-triphosphate = DNA(n+1) + diphosphate. Functionally, poorly processive, error-prone DNA polymerase involved in untargeted mutagenesis. Copies undamaged DNA at stalled replication forks, which arise in vivo from mismatched or misaligned primer ends. These misaligned primers can be extended by PolIV. Exhibits no 3'-5' exonuclease (proofreading) activity. May be involved in translesional synthesis, in conjunction with the beta clamp from PolIII. This chain is DNA polymerase IV, found in Pseudoalteromonas translucida (strain TAC 125).